Here is a 117-residue protein sequence, read N- to C-terminus: MARVTVEDCVDKVPNRFELVMLAAHRAREIASGSALTIDRDNDKNPVVALREIAEETQSAESLRERMIESHQTQIEVDEPEEDQMALLMGSEVDRPVQDDMSEEKLLRALMEAQGQN.

It belongs to the RNA polymerase subunit omega family. The RNAP catalytic core consists of 2 alpha, 1 beta, 1 beta' and 1 omega subunit. When a sigma factor is associated with the core the holoenzyme is formed, which can initiate transcription.

The catalysed reaction is RNA(n) + a ribonucleoside 5'-triphosphate = RNA(n+1) + diphosphate. Functionally, promotes RNA polymerase assembly. Latches the N- and C-terminal regions of the beta' subunit thereby facilitating its interaction with the beta and alpha subunits. This is DNA-directed RNA polymerase subunit omega from Cereibacter sphaeroides (strain ATCC 17025 / ATH 2.4.3) (Rhodobacter sphaeroides).